The following is a 430-amino-acid chain: Ribosomal protein uS12 methylthiotransferase RimO (430 aa).

The MTTase N-terminal domain maps to 1–116; that stretch reads MRVGIKVLGC…IANALEKGTD (116 aa). [4Fe-4S] cluster is bound by residues cysteine 10, cysteine 46, cysteine 79, cysteine 148, cysteine 152, and cysteine 155. A Radical SAM core domain is found at 134–365; that stretch reads LEERPYAYVK…LLQAEISNSR (232 aa). The region spanning 367 to 430 is the TRAM domain; that stretch reads DRFIGRKLKF…DEYDMWGSVT (64 aa).

This sequence belongs to the methylthiotransferase family. RimO subfamily. The cofactor is [4Fe-4S] cluster.

The protein resides in the cytoplasm. It carries out the reaction L-aspartate(89)-[ribosomal protein uS12]-hydrogen + (sulfur carrier)-SH + AH2 + 2 S-adenosyl-L-methionine = 3-methylsulfanyl-L-aspartate(89)-[ribosomal protein uS12]-hydrogen + (sulfur carrier)-H + 5'-deoxyadenosine + L-methionine + A + S-adenosyl-L-homocysteine + 2 H(+). Catalyzes the methylthiolation of an aspartic acid residue of ribosomal protein uS12. This Thermotoga sp. (strain RQ2) protein is Ribosomal protein uS12 methylthiotransferase RimO.